The primary structure comprises 401 residues: LL-diaminopimelate aminotransferase (401 aa).

The substrate site is built by tyrosine 15 and glycine 42. Pyridoxal 5'-phosphate contacts are provided by residues tyrosine 72, 108 to 109, tyrosine 132, asparagine 176, tyrosine 207, and 235 to 237; these read AK and SFS. The substrate site is built by lysine 109, tyrosine 132, and asparagine 176. Lysine 238 bears the N6-(pyridoxal phosphate)lysine mark. Arginine 246 and asparagine 281 together coordinate pyridoxal 5'-phosphate. Substrate contacts are provided by asparagine 281 and arginine 377.

The protein belongs to the class-I pyridoxal-phosphate-dependent aminotransferase family. LL-diaminopimelate aminotransferase subfamily. In terms of assembly, homodimer. Pyridoxal 5'-phosphate serves as cofactor.

The catalysed reaction is (2S,6S)-2,6-diaminopimelate + 2-oxoglutarate = (S)-2,3,4,5-tetrahydrodipicolinate + L-glutamate + H2O + H(+). It participates in amino-acid biosynthesis; L-lysine biosynthesis via DAP pathway; LL-2,6-diaminopimelate from (S)-tetrahydrodipicolinate (aminotransferase route): step 1/1. Involved in the synthesis of meso-diaminopimelate (m-DAP or DL-DAP), required for both lysine and peptidoglycan biosynthesis. Catalyzes the direct conversion of tetrahydrodipicolinate to LL-diaminopimelate. In Azobacteroides pseudotrichonymphae genomovar. CFP2, this protein is LL-diaminopimelate aminotransferase.